Here is a 1193-residue protein sequence, read N- to C-terminus: Falcilysin (1193 aa).

Residue histidine 129 coordinates Zn(2+). Catalysis depends on glutamate 132, which acts as the Proton acceptor. Positions 133 and 243 each coordinate Zn(2+). Residues 376 to 404 (DKTNNHNNNHSNNQSSENNGYSNGSHSSD) are disordered. A compositionally biased stretch (low complexity) spans 380 to 394 (NHNNNHSNNQSSENN). Residues 395–404 (GYSNGSHSSD) show a composition bias toward polar residues. Positions 583-619 (LLEGDENYAQEQENLEKQELKKRIENFNEQEKEQVIK) form a coiled coil.

The protein belongs to the peptidase M16 family. As to quaternary structure, monomer. Component of the hemozoin formation complex (HFC) composed of falcipains FP2A and/or FP2B, plasmepsins PMII, PMIII/HAP and PMIV, heme detoxifying protein HDP and falcilysin FLN. The HFC complex is involved in hemoglobin degradation and detoxification of heme in the food vacuole during the asexual blood stage. Zn(2+) serves as cofactor. Does not require processing for targeting to the food vacuole or maturation.

The protein resides in the vacuole membrane. It localises to the plastid. The protein localises to the apicoplast. Its subcellular location is the vesicle. In terms of biological role, in the food vacuole, acts downstream of proteases plasmepsins PMI and PMII and falcipains during the catabolism of host hemoglobin by cleaving peptide fragments of alpha and beta hemoglobin subunits generated by PMI and PMII and falcipains. In the apicoplast, degrades apicoplast transit peptides after their cleavage. Prefers bulky hydrophobic amino acids in the P1' position at both acidic and neutral pH. At P2', prefers hydrophobic residues at acidic pH; at neutral pH, these same residues are abundant but prefers Arg. At P3', prefers hydrophobic residues, especially Met, at both pH conditions. At P4' and P5', prefers acidic residues at acidic pH, however, at neutral pH, the enzyme is less selective at these positions. The optimal site cleavage at acidic pH is YNEHS-|-FFMEE and, at neutral pH, MKRHS-|-FRMRG. The protein is Falcilysin of Plasmodium falciparum (isolate 3D7).